Consider the following 458-residue polypeptide: Monomethylamine methyltransferase MtmB1 (458 aa).

Residue Pyl-202 is a non-standard amino acid, pyrrolysine.

It belongs to the monomethylamine methyltransferase family.

The enzyme catalyses Co(I)-[methylamine-specific corrinoid protein] + methylamine + H(+) = methyl-Co(III)-[methylamine-specific corrinoid protein] + NH4(+). It functions in the pathway one-carbon metabolism; methanogenesis from methylamine. Functionally, catalyzes the transfer of the methyl group from monomethylamine to the corrinoid cofactor of MtmC. This chain is Monomethylamine methyltransferase MtmB1 (mtmB1), found in Methanosarcina barkeri (strain Fusaro / DSM 804).